Consider the following 1976-residue polypeptide: Myosin-10 (1976 aa).

Arginine 18 is subject to Omega-N-methylarginine. Residues 31–81 (TAKKLVWIPSERHGFEAASIKEERGDEVMVELAENGKKAMVNKDDIQKMNP) form the Myosin N-terminal SH3-like domain. The region spanning 85–783 (SKVEDMAELT…VLAHLEEERD (699 aa)) is the Myosin motor domain. Position 178–185 (178–185 (GESGAGKT)) interacts with ATP. Leucine 214 is modified (phosphoserine). Lysine 442 carries the N6-acetyllysine modification. Residues 661-683 (LTKLMATLRNTNPNFVRCIIPNH) form an actin-binding region. Residues 786-815 (ITDIIIFFQAVCRGYLARKAFAKKQQQLSA) form the IQ domain. The stretch at 845–1976 (LQVTRQEEEL…VNETQPPQSE (1132 aa)) forms a coiled coil. The tract at residues 1127 to 1147 (FESEKASRNKAEKQKRDLSEE) is disordered. A compositionally biased stretch (basic and acidic residues) spans 1129-1147 (SEKASRNKAEKQKRDLSEE). Position 1145 is a phosphoserine (serine 1145). An N6-acetyllysine mark is found at lysine 1241, lysine 1301, and lysine 1645. 2 disordered regions span residues 1697–1728 (ASSE…SALL) and 1872–1976 (MEKA…PQSE). Over residues 1698 to 1708 (SSERARRHAEQ) the composition is skewed to basic and acidic residues. An Omega-N-methylarginine modification is found at arginine 1930. 4 positions are modified to phosphoserine: serine 1935, serine 1937, serine 1938, and serine 1939. Residue arginine 1940 is modified to Omega-N-methylarginine. Residues serine 1952 and serine 1956 each carry the phosphoserine modification. Threonine 1960 is modified (phosphothreonine). The span at 1967–1976 (VNETQPPQSE) shows a compositional bias: polar residues. Phosphoserine is present on serine 1975.

Belongs to the TRAFAC class myosin-kinesin ATPase superfamily. Myosin family. As to quaternary structure, myosin is a hexameric protein that consists of 2 heavy chain subunits (MHC), 2 alkali light chain subunits (MLC) and 2 regulatory light chain subunits (MLC-2). Interacts with PLEKHG6. Interacts with ECPAS. Interacts with KIF26B. Interacts with LARP6. Interacts with MCC. Interacts with CFAP95. In terms of assembly, (Microbial infection) Interacts with herpes simplex virus 1/HHV-1 envelope glycoprotein B. Post-translationally, phosphorylated by ABL2. Isoform 1 is expressed in cerebellum and spinal chord. Isoform 2 is expressed in cerebrum and retina. Isoform 3 is expressed in the cerebrum and to a much lower extent in cerebellum.

It is found in the cell projection. Its subcellular location is the lamellipodium. The protein localises to the cell membrane. Its function is as follows. Cellular myosin that appears to play a role in cytokinesis, cell shape, and specialized functions such as secretion and capping. Involved with LARP6 in the stabilization of type I collagen mRNAs for CO1A1 and CO1A2. During cell spreading, plays an important role in cytoskeleton reorganization, focal contacts formation (in the central part but not the margins of spreading cells), and lamellipodial extension; this function is mechanically antagonized by MYH9. Functionally, (Microbial infection) Acts as a receptor for herpes simplex virus 1/HHV-1 envelope glycoprotein B. The polypeptide is Myosin-10 (MYH10) (Homo sapiens (Human)).